The primary structure comprises 393 residues: Elongation factor Tu (393 aa).

The tr-type G domain maps to 10–203; sequence KPHVNIGTIG…AVDNYIPTPV (194 aa). The tract at residues 19–26 is G1; the sequence is GHVDHGKT. Residue 19 to 26 participates in GTP binding; that stretch reads GHVDHGKT. Mg(2+) is bound at residue Thr-26. A G2 region spans residues 60-64; sequence GITIS. The tract at residues 81 to 84 is G3; the sequence is DCPG. GTP contacts are provided by residues 81 to 85 and 136 to 139; these read DCPGH and NKVD. Positions 136 to 139 are G4; sequence NKVD. Residues 173–175 form a G5 region; it reads SAL.

This sequence belongs to the TRAFAC class translation factor GTPase superfamily. Classic translation factor GTPase family. EF-Tu/EF-1A subfamily. As to quaternary structure, monomer.

The protein resides in the cytoplasm. The enzyme catalyses GTP + H2O = GDP + phosphate + H(+). In terms of biological role, GTP hydrolase that promotes the GTP-dependent binding of aminoacyl-tRNA to the A-site of ribosomes during protein biosynthesis. This Chloroherpeton thalassium (strain ATCC 35110 / GB-78) protein is Elongation factor Tu.